Reading from the N-terminus, the 261-residue chain is 5'-nucleotidase SurE (261 aa).

4 residues coordinate a divalent metal cation: Asp8, Asp9, Ser43, and Asn96.

The protein belongs to the SurE nucleotidase family. The cofactor is a divalent metal cation.

The protein localises to the cytoplasm. The enzyme catalyses a ribonucleoside 5'-phosphate + H2O = a ribonucleoside + phosphate. In terms of biological role, nucleotidase that shows phosphatase activity on nucleoside 5'-monophosphates. This chain is 5'-nucleotidase SurE, found in Roseobacter denitrificans (strain ATCC 33942 / OCh 114) (Erythrobacter sp. (strain OCh 114)).